The chain runs to 106 residues: Thioredoxin (106 aa).

Positions serine 2–glycine 106 constitute a Thioredoxin domain. A disulfide bond links cysteine 30 and cysteine 33.

The protein belongs to the thioredoxin family.

Functionally, participates in various redox reactions through the reversible oxidation of its active center dithiol to a disulfide and catalyzes dithiol-disulfide exchange reactions. This is Thioredoxin (trxA) from Helicobacter pylori (strain J99 / ATCC 700824) (Campylobacter pylori J99).